Consider the following 862-residue polypeptide: Protein SEY1 (862 aa).

Topologically, residues 1-747 are cytoplasmic; that stretch reads MVSNGHFASA…KRSAIGGMTQ (747 aa). The 258-residue stretch at 49–306 folds into the GB1/RHD3-type G domain; that stretch reads GFNYHLISVF…IPADGFAVYA (258 aa). 59–66 contacts GTP; sequence GSQSTGKS. The stretch at 481–507 forms a coiled coil; it reads SNYTQELALYQKDLEKISAQLRKDEMR. Residues 748 to 768 form a helical membrane-spanning segment; that stretch reads IPVYFYILLLALGWNEIVAVL. Topologically, residues 769-771 are lumenal; the sequence is RNP. The helical transmembrane segment at 772–792 threads the bilayer; it reads LYFFMLFLCAVGAFVTYQLNL. Residues 793–862 are Cytoplasmic-facing; the sequence is WGPMIKMAEA…DDDDEDEGSW (70 aa). The interval 819 to 862 is disordered; the sequence is LEPSEAGPHAARYKNSTEEYEMSNVKAPQRTNSGDDDDEDEGSW. A compositionally biased stretch (acidic residues) spans 852–862; it reads GDDDDEDEGSW.

This sequence belongs to the TRAFAC class dynamin-like GTPase superfamily. GB1/RHD3 GTPase family. RHD3 subfamily.

The protein localises to the endoplasmic reticulum membrane. Its function is as follows. Cooperates with the reticulon proteins and tubule-shaping DP1 family proteins to generate and maintain the structure of the tubular endoplasmic reticulum network. Has GTPase activity, which is required for its function in ER organization. The protein is Protein SEY1 of Uncinocarpus reesii (strain UAMH 1704).